The primary structure comprises 618 residues: Proline--tRNA ligase (618 aa).

It belongs to the class-II aminoacyl-tRNA synthetase family. ProS type 1 subfamily. Homodimer.

It is found in the cytoplasm. It carries out the reaction tRNA(Pro) + L-proline + ATP = L-prolyl-tRNA(Pro) + AMP + diphosphate. In terms of biological role, catalyzes the attachment of proline to tRNA(Pro) in a two-step reaction: proline is first activated by ATP to form Pro-AMP and then transferred to the acceptor end of tRNA(Pro). As ProRS can inadvertently accommodate and process non-cognate amino acids such as alanine and cysteine, to avoid such errors it has two additional distinct editing activities against alanine. One activity is designated as 'pretransfer' editing and involves the tRNA(Pro)-independent hydrolysis of activated Ala-AMP. The other activity is designated 'posttransfer' editing and involves deacylation of mischarged Ala-tRNA(Pro). The misacylated Cys-tRNA(Pro) is not edited by ProRS. In Streptococcus pyogenes serotype M18 (strain MGAS8232), this protein is Proline--tRNA ligase.